An 873-amino-acid chain; its full sequence is Alanine--tRNA ligase (873 aa).

Residues histidine 562, histidine 566, cysteine 666, and histidine 670 each contribute to the Zn(2+) site.

The protein belongs to the class-II aminoacyl-tRNA synthetase family. It depends on Zn(2+) as a cofactor.

Its subcellular location is the cytoplasm. The enzyme catalyses tRNA(Ala) + L-alanine + ATP = L-alanyl-tRNA(Ala) + AMP + diphosphate. Catalyzes the attachment of alanine to tRNA(Ala) in a two-step reaction: alanine is first activated by ATP to form Ala-AMP and then transferred to the acceptor end of tRNA(Ala). Also edits incorrectly charged Ser-tRNA(Ala) and Gly-tRNA(Ala) via its editing domain. In Dichelobacter nodosus (strain VCS1703A), this protein is Alanine--tRNA ligase.